We begin with the raw amino-acid sequence, 576 residues long: Arginine--tRNA ligase (576 aa).

The short motif at 122 to 132 is the 'HIGH' region element; the sequence is PNVAKEMHVGH.

It belongs to the class-I aminoacyl-tRNA synthetase family. As to quaternary structure, monomer.

The protein localises to the cytoplasm. It catalyses the reaction tRNA(Arg) + L-arginine + ATP = L-arginyl-tRNA(Arg) + AMP + diphosphate. The polypeptide is Arginine--tRNA ligase (Mannheimia succiniciproducens (strain KCTC 0769BP / MBEL55E)).